The primary structure comprises 175 residues: Pancreatic beta cell growth factor (175 aa).

An N-terminal signal peptide occupies residues 1–26 (MMLPMTLCRMSWMLLSCLMFLSWVEG). The C-type lectin domain maps to 38-175 (ITCPQGSVAY…ELPYICKFKV (138 aa)). Cystine bridges form between Cys-40–Cys-51, Cys-68–Cys-171, and Cys-146–Cys-163.

As to expression, expressed only in CW animals pancreas and to a lesser extent in duodenum. In pancreas it is found in acinar cells, but not in islets.

It is found in the secreted. In terms of biological role, constituent of ilotropin, which is a partially purified preparation of cellophane wrapping (CW) pancreata. Capable of initiating duct cell proliferation, a prerequisite for islet neogenesis. This chain is Pancreatic beta cell growth factor (INGAP), found in Mesocricetus auratus (Golden hamster).